Consider the following 334-residue polypeptide: Heat-inducible transcription repressor HrcA (334 aa).

This sequence belongs to the HrcA family.

Functionally, negative regulator of class I heat shock genes (grpE-dnaK-dnaJ and groELS operons). Prevents heat-shock induction of these operons. This is Heat-inducible transcription repressor HrcA from Verminephrobacter eiseniae (strain EF01-2).